We begin with the raw amino-acid sequence, 127 residues long: Large ribosomal subunit protein bL12 (127 aa).

It belongs to the bacterial ribosomal protein bL12 family. Homodimer. Part of the ribosomal stalk of the 50S ribosomal subunit. Forms a multimeric L10(L12)X complex, where L10 forms an elongated spine to which 2 to 4 L12 dimers bind in a sequential fashion. Binds GTP-bound translation factors.

Forms part of the ribosomal stalk which helps the ribosome interact with GTP-bound translation factors. Is thus essential for accurate translation. This Rhizobium etli (strain ATCC 51251 / DSM 11541 / JCM 21823 / NBRC 15573 / CFN 42) protein is Large ribosomal subunit protein bL12.